The chain runs to 129 residues: Glycerol-3-phosphate cytidylyltransferase (129 aa).

Residues 9 to 10 and 14 to 17 contribute to the CTP site; these read TF and HYGH. Residue Lys44 participates in substrate binding. Lys46 contributes to the CTP binding site. Lys77 provides a ligand contact to substrate. CTP is bound at residue 113 to 120; it reads RTDGISTT.

This sequence belongs to the cytidylyltransferase family. As to quaternary structure, homodimer.

Its subcellular location is the cytoplasm. It catalyses the reaction sn-glycerol 3-phosphate + CTP + H(+) = CDP-glycerol + diphosphate. It participates in cell wall biogenesis; poly(ribitol phosphate) teichoic acid biosynthesis. Functionally, catalyzes the transfer of the cytidylyl group of CTP to sn-glycerol 3-phosphate so the activated glycerol 3-phosphate can be used for teichoic acid synthesis, via incorporation into both the linkage unit by TarB and TarF. The chain is Glycerol-3-phosphate cytidylyltransferase (tarD) from Bacillus spizizenii (strain ATCC 23059 / NRRL B-14472 / W23) (Bacillus subtilis subsp. spizizenii).